Reading from the N-terminus, the 306-residue chain is N-acetylmuramic acid 6-phosphate etherase (306 aa).

The SIS domain maps to 55 to 218; the sequence is IVPRMKKGGR…STGVMIKLGK (164 aa). Glutamate 83 functions as the Proton donor in the catalytic mechanism. Glutamate 114 is an active-site residue.

Belongs to the GCKR-like family. MurNAc-6-P etherase subfamily. In terms of assembly, homodimer.

The catalysed reaction is N-acetyl-D-muramate 6-phosphate + H2O = N-acetyl-D-glucosamine 6-phosphate + (R)-lactate. It functions in the pathway amino-sugar metabolism; N-acetylmuramate degradation. In terms of biological role, specifically catalyzes the cleavage of the D-lactyl ether substituent of MurNAc 6-phosphate, producing GlcNAc 6-phosphate and D-lactate. This is N-acetylmuramic acid 6-phosphate etherase from Caldanaerobacter subterraneus subsp. tengcongensis (strain DSM 15242 / JCM 11007 / NBRC 100824 / MB4) (Thermoanaerobacter tengcongensis).